We begin with the raw amino-acid sequence, 933 residues long: MSSMILPTEPEALPNRADDSAALEAETRLRNDIRLLGRILGDTVRDQEGAAVFDLVEGIRQTSIRFHRDDDTTARRELEAILDGMSASDTVKIVRAFSYFSHLANIAEDQNNIRQMRVGSTAGSAPRAGMLAKTLAHARADGIGAAELRDFFKTALVSPVLTAHPTEVRRKSTMDREMQIAALLDERERVQLTPEEWEQNEEQLRRAVVTLWKTNLLRRTKLTVLDEVTNGLSFYDYTFLREVPRLHCALEDQLGGGEGAEADAELASFLRMGSWIGGDRDGNPFVTAEVLHGTLQLQSARVLRFYLDELHELGSELSLASHLVAISDEVRALAERSPDHSPHRRHEPYRLAVSGIYARLAATAAKLRIDSIRAPVGEAEAYASVHDFKADLDAIHRSLVAHNAGVIARGRLRQLRRAADCFGFHLASLDMRQNSAVHERTIAELMNAAHPASAYLEIGEDARIALLTAELRSARPLTSIFVKYSDETVGELAVLHEAAQAHATYGAAAIPQCIISMTKGVSDLLEVAVLLKEVGLIDPSGRSAINIVPLFETIEDLQASSAIMDRLLGIPEYRRLVDSRGGVQEVMLGYSDSNKDGGFVTSGWELYKAEIGLIEIFEHHGIRLRLFHGRGGSVGRGGGPSYDAIVAQPGGAVNGQIRITEQGEIITSKYSNREVGRNNLEILTAATLEASLLQPKRVAPQRDYLDAMEQLSAMAFKAYRGLVYETDGFVDYFWASTVITEISTLNIGSRPASRKKTRAIEDLRAIPWVFSWAQCRLMLPGWYGFGSAVEAWIAAHPDKGVPFLRSMYQEWPFFRTLLSNMDMVLSKSSLGIASRYAELVPDETLRREIFGRIRAEWHASVDGLLAIMGHDKLLQGNPLLDRSIRHRFPYLDPLNHVQVQLLREHRTHDPDEQILRGIQLTINGISAGLRNSG.

Active-site residues include His-164 and Lys-595.

Belongs to the PEPCase type 1 family. Requires Mg(2+) as cofactor.

It catalyses the reaction oxaloacetate + phosphate = phosphoenolpyruvate + hydrogencarbonate. In terms of biological role, forms oxaloacetate, a four-carbon dicarboxylic acid source for the tricarboxylic acid cycle. This is Phosphoenolpyruvate carboxylase from Rhodopseudomonas palustris (strain HaA2).